A 273-amino-acid chain; its full sequence is Ribosomal RNA small subunit methyltransferase A (273 aa).

6 residues coordinate S-adenosyl-L-methionine: Asn-18, Leu-20, Gly-45, Glu-66, Asp-91, and Asn-113.

This sequence belongs to the class I-like SAM-binding methyltransferase superfamily. rRNA adenine N(6)-methyltransferase family. RsmA subfamily.

It localises to the cytoplasm. It carries out the reaction adenosine(1518)/adenosine(1519) in 16S rRNA + 4 S-adenosyl-L-methionine = N(6)-dimethyladenosine(1518)/N(6)-dimethyladenosine(1519) in 16S rRNA + 4 S-adenosyl-L-homocysteine + 4 H(+). Functionally, specifically dimethylates two adjacent adenosines (A1518 and A1519) in the loop of a conserved hairpin near the 3'-end of 16S rRNA in the 30S particle. May play a critical role in biogenesis of 30S subunits. In Klebsiella pneumoniae subsp. pneumoniae (strain ATCC 700721 / MGH 78578), this protein is Ribosomal RNA small subunit methyltransferase A.